We begin with the raw amino-acid sequence, 254 residues long: Sensory rhodopsin (254 aa).

The Extracellular segment spans residues 1 to 4; sequence MTGA. Residues 5–26 traverse the membrane as a helical segment; it reads VTSAYWLAAVAFLIGVGITAAL. Residues 27–35 lie on the Cytoplasmic side of the membrane; that stretch reads YAKLEGSRA. The helical transmembrane segment at 36-57 threads the bilayer; sequence RTRLAALAVIPGFAGLSYVGMA. Over 58-71 the chain is Extracellular; the sequence is LGIGTVTVNGAELV. The chain crosses the membrane as a helical span at residues 72-93; it reads GLRYVDWVVTTPLLVGFIGYNA. The Cytoplasmic segment spans residues 94-96; sequence GAS. A helical membrane pass occupies residues 97–119; sequence RRAIAGVMIADALMIVFGAAAVV. Over 120 to 123 the chain is Extracellular; that stretch reads SGGT. Residues 124 to 151 form a helical membrane-spanning segment; it reads LKWALFGVSALFHVSLFAYLYVIFPGGI. The Cytoplasmic portion of the chain corresponds to 152–154; the sequence is PDD. The helical transmembrane segment at 155–182 threads the bilayer; sequence PMQRGLFSLLKNHVGLLWLAYPFVWLMG. Over 183–190 the chain is Extracellular; the sequence is PAGIGFTG. A helical transmembrane segment spans residues 191 to 223; sequence AVGAALTYAFLDVLAKVPYVYFFYARRQAFIDV. Lys206 is modified (N6-(retinylidene)lysine). Topologically, residues 224 to 254 are cytoplasmic; the sequence is TDSRAAAKGDGPAVGGEAPVATGDDAPTAAD. Positions 231 to 254 are disordered; sequence KGDGPAVGGEAPVATGDDAPTAAD.

Belongs to the archaeal/bacterial/fungal opsin family.

The protein localises to the cell membrane. Functionally, involved in the control of phototaxis. This chain is Sensory rhodopsin (sop), found in Halorubrum sodomense.